The chain runs to 336 residues: MEKLFIPKGYKPLLSLRETEVAIKELKDFFEDSLAKNLNLTRVSAPLFVNKGSGLNDDLNGIERPVSFDMKAMPEFNIQIVHSLAKWKRLALHRYEFEHGEGLYTDMNAIRRDEDLDNIHSIYVDQWDWEKIIDKEERNLETLKETVKSIYGTFKATEDFIVAKYPHIEKILPEDITFITSQELEDRYPDLTSKERETAICKEFGAVFIIGIGGKLASGEKHDDRSPDYDDWTLNGDLLFYYPLFDEAVELSSMGIRVDEESLLKQLKIAECEERKELPFHQMLLEGKLPYTIGGGIGQSRICMFFLRKAHIGEVQASMWDEDMIRTCEENNIHLL.

It belongs to the class-II aminoacyl-tRNA synthetase family. AsnA subfamily.

It localises to the cytoplasm. It catalyses the reaction L-aspartate + NH4(+) + ATP = L-asparagine + AMP + diphosphate + H(+). It functions in the pathway amino-acid biosynthesis; L-asparagine biosynthesis; L-asparagine from L-aspartate (ammonia route): step 1/1. The protein is Aspartate--ammonia ligase of Clostridium perfringens (strain 13 / Type A).